The following is a 198-amino-acid chain: Ribonuclease HII (198 aa).

Positions 3–194 constitute an RNase H type-2 domain; the sequence is RRVCGVDEAG…VKRCLALGQQ (192 aa). D9, E10, and D101 together coordinate a divalent metal cation.

The protein belongs to the RNase HII family. Requires Mn(2+) as cofactor. The cofactor is Mg(2+).

It localises to the cytoplasm. It carries out the reaction Endonucleolytic cleavage to 5'-phosphomonoester.. In terms of biological role, endonuclease that specifically degrades the RNA of RNA-DNA hybrids. This chain is Ribonuclease HII, found in Laribacter hongkongensis (strain HLHK9).